A 435-amino-acid polypeptide reads, in one-letter code: Serine/threonine-protein kinase 40 (435 aa).

The Protein kinase domain maps to 35-332 (FVLGPRLGNS…DVLEALSAII (298 aa)). ATP contacts are provided by residues 41–49 (LGNSPVPSI) and Lys66. The active-site Proton acceptor is Asp197.

This sequence belongs to the protein kinase superfamily. CAMK Ser/Thr protein kinase family.

The protein localises to the nucleus. Its subcellular location is the cytoplasm. The enzyme catalyses L-seryl-[protein] + ATP = O-phospho-L-seryl-[protein] + ADP + H(+). It carries out the reaction L-threonyl-[protein] + ATP = O-phospho-L-threonyl-[protein] + ADP + H(+). Its function is as follows. May be a negative regulator of NF-kappa-B and p53-mediated gene transcription. The protein is Serine/threonine-protein kinase 40 (Stk40) of Mus musculus (Mouse).